Here is a 407-residue protein sequence, read N- to C-terminus: Cell division protein FtsZ (407 aa).

GTP is bound by residues 18-22 (GGGVN), 105-107 (GTG), Glu136, Arg140, and Asp184. The disordered stretch occupies residues 312 to 407 (FDGGQPPARR…EELDVPDFLK (96 aa)). Low complexity-rich tracts occupy residues 336–348 (AAPARSSAESTRP) and 368–377 (APATASGESS). The segment covering 381–390 (VSPPHVPPAR) has biased composition (pro residues). Over residues 396–407 (QAEELDVPDFLK) the composition is skewed to acidic residues.

This sequence belongs to the FtsZ family. As to quaternary structure, homodimer. Polymerizes to form a dynamic ring structure in a strictly GTP-dependent manner. Interacts directly with several other division proteins.

It is found in the cytoplasm. Essential cell division protein that forms a contractile ring structure (Z ring) at the future cell division site. The regulation of the ring assembly controls the timing and the location of cell division. One of the functions of the FtsZ ring is to recruit other cell division proteins to the septum to produce a new cell wall between the dividing cells. Binds GTP and shows GTPase activity. This is Cell division protein FtsZ from Streptomyces griseus.